Consider the following 200-residue polypeptide: Translation machinery-associated protein 22 (200 aa).

In terms of domain architecture, SUI1 spans V106–H177.

It belongs to the DENR family. Interacts with the 40S ribosomal subunit.

It is found in the cytoplasm. The sequence is that of Translation machinery-associated protein 22 (TMA22) from Coccidioides immitis (strain RS) (Valley fever fungus).